The primary structure comprises 306 residues: Dermonecrotic toxin LiSicTox-alphaIA2bi (306 aa).

The first 18 residues, 1–18 (MLPYIALILVCWSVLSQA), serve as a signal peptide directing secretion. Residues 19–26 (AQTDVEGR) constitute a propeptide that is removed on maturation. His38 is a catalytic residue. Residues Glu58 and Asp60 each contribute to the Mg(2+) site. Catalysis depends on His74, which acts as the Nucleophile. Intrachain disulfides connect Cys78–Cys84 and Cys80–Cys223. Asp118 contributes to the Mg(2+) binding site. An N-linked (GlcNAc...) asparagine glycan is attached at Asn283.

This sequence belongs to the arthropod phospholipase D family. Class II subfamily. Mg(2+) is required as a cofactor. Expressed by the venom gland.

It is found in the secreted. It carries out the reaction an N-(acyl)-sphingosylphosphocholine = an N-(acyl)-sphingosyl-1,3-cyclic phosphate + choline. It catalyses the reaction an N-(acyl)-sphingosylphosphoethanolamine = an N-(acyl)-sphingosyl-1,3-cyclic phosphate + ethanolamine. The enzyme catalyses a 1-acyl-sn-glycero-3-phosphocholine = a 1-acyl-sn-glycero-2,3-cyclic phosphate + choline. The catalysed reaction is a 1-acyl-sn-glycero-3-phosphoethanolamine = a 1-acyl-sn-glycero-2,3-cyclic phosphate + ethanolamine. In terms of biological role, dermonecrotic toxins cleave the phosphodiester linkage between the phosphate and headgroup of certain phospholipids (sphingolipid and lysolipid substrates), forming an alcohol (often choline) and a cyclic phosphate. This toxin acts on sphingomyelin (SM). It may also act on ceramide phosphoethanolamine (CPE), lysophosphatidylcholine (LPC) and lysophosphatidylethanolamine (LPE), but not on lysophosphatidylserine (LPS), and lysophosphatidylglycerol (LPG). It acts by transphosphatidylation, releasing exclusively cyclic phosphate products as second products. Induces dermonecrosis, hemolysis, increased vascular permeability, edema, inflammatory response, and platelet aggregation. This is Dermonecrotic toxin LiSicTox-alphaIA2bi from Loxosceles intermedia (Brown spider).